A 192-amino-acid chain; its full sequence is GTP cyclohydrolase-2 (192 aa).

50-54 (RLHSE) is a binding site for GTP. Zn(2+) contacts are provided by Cys-55, Cys-66, and Cys-68. GTP-binding positions include 92-94 (EGR) and Thr-114. Asp-126 serves as the catalytic Proton acceptor. Arg-128 acts as the Nucleophile in catalysis. 2 residues coordinate GTP: Thr-149 and Lys-154.

The protein belongs to the GTP cyclohydrolase II family. The cofactor is Zn(2+).

The catalysed reaction is GTP + 4 H2O = 2,5-diamino-6-hydroxy-4-(5-phosphoribosylamino)-pyrimidine + formate + 2 phosphate + 3 H(+). It participates in cofactor biosynthesis; riboflavin biosynthesis; 5-amino-6-(D-ribitylamino)uracil from GTP: step 1/4. Its function is as follows. Catalyzes the conversion of GTP to 2,5-diamino-6-ribosylamino-4(3H)-pyrimidinone 5'-phosphate (DARP), formate and pyrophosphate. This chain is GTP cyclohydrolase-2, found in Helicobacter pylori (strain Shi470).